A 427-amino-acid polypeptide reads, in one-letter code: Glutamate-1-semialdehyde 2,1-aminomutase (427 aa).

Lysine 263 is subject to N6-(pyridoxal phosphate)lysine.

The protein belongs to the class-III pyridoxal-phosphate-dependent aminotransferase family. HemL subfamily. In terms of assembly, homodimer. Pyridoxal 5'-phosphate serves as cofactor.

The protein localises to the cytoplasm. It carries out the reaction (S)-4-amino-5-oxopentanoate = 5-aminolevulinate. It participates in porphyrin-containing compound metabolism; protoporphyrin-IX biosynthesis; 5-aminolevulinate from L-glutamyl-tRNA(Glu): step 2/2. The sequence is that of Glutamate-1-semialdehyde 2,1-aminomutase from Caldicellulosiruptor saccharolyticus (strain ATCC 43494 / DSM 8903 / Tp8T 6331).